Reading from the N-terminus, the 250-residue chain is MIDAILGNIIWMALITIGGVLISWSVHFVPVGGAPAAMAQATGIGTGTVQLAAGAGLTGLVSAGFMMNVTDNLPLILASGSVGAMIMIAVTMIVGSIVYVYGVGVVPSSAKVKVDPITKYRQDLYVSQGTEGHGLPTVSYVSGIIGGGLGGIGGSLVYYSLIEVGMSAGLEAVGVTNSVTGHELVAVAAIFAIGIFFVNAVIPSYNIGGTIEGFHDPKFKKWPKAVVSSLVASIMCAIVAVVAIAQLGGI.

6 helical membrane-spanning segments follow: residues isoleucine 9–valine 29, glycine 47–methionine 67, isoleucine 86–valine 106, isoleucine 144–valine 164, leucine 184–serine 204, and leucine 230–isoleucine 250.

It belongs to the MtrD family. In terms of assembly, the complex is composed of 8 subunits; MtrA, MtrB, MtrC, MtrD, MtrE, MtrF, MtrG and MtrH.

The protein localises to the cell membrane. It carries out the reaction 5-methyl-5,6,7,8-tetrahydromethanopterin + coenzyme M + 2 Na(+)(in) = 5,6,7,8-tetrahydromethanopterin + methyl-coenzyme M + 2 Na(+)(out). It participates in one-carbon metabolism; methanogenesis from CO(2); methyl-coenzyme M from 5,10-methylene-5,6,7,8-tetrahydromethanopterin: step 2/2. In terms of biological role, part of a complex that catalyzes the formation of methyl-coenzyme M and tetrahydromethanopterin from coenzyme M and methyl-tetrahydromethanopterin. This is an energy-conserving, sodium-ion translocating step. The protein is Tetrahydromethanopterin S-methyltransferase subunit D of Methanosarcina barkeri (strain Fusaro / DSM 804).